Reading from the N-terminus, the 146-residue chain is Nucleoside diphosphate kinase (146 aa).

6 residues coordinate ATP: Lys-11, Phe-59, Arg-87, Thr-93, Arg-104, and Asn-114. The active-site Pros-phosphohistidine intermediate is His-117.

Belongs to the NDK family. As to quaternary structure, homotetramer. It depends on Mg(2+) as a cofactor.

The protein localises to the cytoplasm. The catalysed reaction is a 2'-deoxyribonucleoside 5'-diphosphate + ATP = a 2'-deoxyribonucleoside 5'-triphosphate + ADP. It catalyses the reaction a ribonucleoside 5'-diphosphate + ATP = a ribonucleoside 5'-triphosphate + ADP. Functionally, major role in the synthesis of nucleoside triphosphates other than ATP. The ATP gamma phosphate is transferred to the NDP beta phosphate via a ping-pong mechanism, using a phosphorylated active-site intermediate. This Anaplasma marginale (strain Florida) protein is Nucleoside diphosphate kinase.